A 606-amino-acid polypeptide reads, in one-letter code: Elongation factor 4 (606 aa).

The tr-type G domain occupies Ser7 to Lys189. GTP-binding positions include Asp19–Thr24 and Asn136–Asp139.

Belongs to the TRAFAC class translation factor GTPase superfamily. Classic translation factor GTPase family. LepA subfamily.

Its subcellular location is the cell inner membrane. The catalysed reaction is GTP + H2O = GDP + phosphate + H(+). Required for accurate and efficient protein synthesis under certain stress conditions. May act as a fidelity factor of the translation reaction, by catalyzing a one-codon backward translocation of tRNAs on improperly translocated ribosomes. Back-translocation proceeds from a post-translocation (POST) complex to a pre-translocation (PRE) complex, thus giving elongation factor G a second chance to translocate the tRNAs correctly. Binds to ribosomes in a GTP-dependent manner. In Parasynechococcus marenigrum (strain WH8102), this protein is Elongation factor 4.